Reading from the N-terminus, the 253-residue chain is Demethylmenaquinone methyltransferase (253 aa).

Residues Thr-62, Asp-80, 102-103 (DA), and Ser-119 each bind S-adenosyl-L-methionine.

It belongs to the class I-like SAM-binding methyltransferase superfamily. MenG/UbiE family.

It carries out the reaction a 2-demethylmenaquinol + S-adenosyl-L-methionine = a menaquinol + S-adenosyl-L-homocysteine + H(+). It functions in the pathway quinol/quinone metabolism; menaquinone biosynthesis; menaquinol from 1,4-dihydroxy-2-naphthoate: step 2/2. In terms of biological role, methyltransferase required for the conversion of demethylmenaquinol (DMKH2) to menaquinol (MKH2). The sequence is that of Demethylmenaquinone methyltransferase from Paenarthrobacter aurescens (strain TC1).